An 85-amino-acid chain; its full sequence is U4-theraphotoxin-Hhn1a (85 aa).

Residues 1-22 form the signal peptide; it reads MKVTLIAILTCAAVLVLRTTAA. Positions 23–48 are excised as a propeptide; that stretch reads EELEAESQLMEVGMPDTELAAVDEER. Disulfide bonds link C52-C66, C56-C77, and C71-C82.

This sequence belongs to the neurotoxin 12 (Hwtx-2) family. 02 (Hwtx-2) subfamily. As to quaternary structure, monomer. Expressed by the venom gland.

Its subcellular location is the secreted. Its function is as follows. Neurotoxin active on both insects and mammals. The sequence is that of U4-theraphotoxin-Hhn1a from Cyriopagopus hainanus (Chinese bird spider).